Consider the following 551-residue polypeptide: Glucose-6-phosphate isomerase 2 (551 aa).

E359 acts as the Proton donor in catalysis. Catalysis depends on residues H390 and K514.

Belongs to the GPI family.

The protein resides in the cytoplasm. The enzyme catalyses alpha-D-glucose 6-phosphate = beta-D-fructose 6-phosphate. Its pathway is carbohydrate biosynthesis; gluconeogenesis. It participates in carbohydrate degradation; glycolysis; D-glyceraldehyde 3-phosphate and glycerone phosphate from D-glucose: step 2/4. Functionally, catalyzes the reversible isomerization of glucose-6-phosphate to fructose-6-phosphate. This chain is Glucose-6-phosphate isomerase 2, found in Streptomyces coelicolor (strain ATCC BAA-471 / A3(2) / M145).